We begin with the raw amino-acid sequence, 116 residues long: Somatostatin (116 aa).

The signal sequence occupies residues 1–24 (MLSCRLQCALAALSIVLALGGVTG). Positions 25–88 (APSDPRLRQF…QDEMRLELQR (64 aa)) are excised as a propeptide. The residue at position 43 (Ala43) is an Alanine amide. Cys105 and Cys116 are joined by a disulfide.

Belongs to the somatostatin family. C-terminal amidation of the neuronostatin peptide is required for its biological activity, including for the regulation of mean arterial pressure.

Its subcellular location is the secreted. In terms of biological role, inhibits the secretion of pituitary hormones, including that of growth hormone/somatotropin (GH1), PRL, ACTH, luteinizing hormone (LH) and TSH. Also impairs ghrelin- and GnRH-stimulated secretion of GH1 and LH; the inhibition of ghrelin-stimulated secretion of GH1 can be further increased by neuronostatin. Its function is as follows. May enhance low-glucose-induced glucagon release by pancreatic alpha cells. This effect may be mediated by binding to GPR107 and PKA activation. May regulate cardiac contractile function. May compromise cardiomyocyte viability. In the central nervous system, may impair memory retention and may affect hippocampal excitability. May also have anxiolytic and anorexigenic effects. May play a role in arterial pressure regulation. May inhibit basal, but not ghrelin- or GnRH-stimulated secretion of GH1 or LH, but does not affect the release of other pituitary hormones, including PRL, ACTH, FSH or TSH. Potentiates inhibitory action of somatostatin on ghrelin-stimulated secretion of GH1, but not that on GnRH-stimulated secretion of LH. This Bos taurus (Bovine) protein is Somatostatin (SST).